A 427-amino-acid polypeptide reads, in one-letter code: Tol-Pal system protein TolB (427 aa).

The first 23 residues, 1-23, serve as a signal peptide directing secretion; it reads MKLLKRLVSVFAIVLAVGSNAFA.

This sequence belongs to the TolB family. In terms of assembly, the Tol-Pal system is composed of five core proteins: the inner membrane proteins TolA, TolQ and TolR, the periplasmic protein TolB and the outer membrane protein Pal. They form a network linking the inner and outer membranes and the peptidoglycan layer.

It localises to the periplasm. In terms of biological role, part of the Tol-Pal system, which plays a role in outer membrane invagination during cell division and is important for maintaining outer membrane integrity. The polypeptide is Tol-Pal system protein TolB (Haemophilus influenzae (strain PittGG)).